The sequence spans 97 residues: Essential MCU regulator, mitochondrial (97 aa).

The N-terminal 35 residues, 1 to 35, are a transit peptide targeting the mitochondrion; it reads MIVPRLALPISLALQRVSRRVAEHPHNLRILQRHM. The chain crosses the membrane as a helical span at residues 53–73; the sequence is PFGLLAIFCAVIPGLFVGATI.

It belongs to the SMDT1/EMRE family.

Its subcellular location is the mitochondrion inner membrane. Functionally, essential regulatory subunit of the mitochondrial calcium uniporter MCU channel, a protein that mediates calcium uptake into mitochondria. The sequence is that of Essential MCU regulator, mitochondrial from Drosophila melanogaster (Fruit fly).